The sequence spans 119 residues: uncharacterized protein (119 aa).

A helical transmembrane segment spans residues 30 to 50; the sequence is LMTLPCVLFLSSFGQAVIVVL.

The protein localises to the membrane. This is an uncharacterized protein from Saccharomyces cerevisiae (strain ATCC 204508 / S288c) (Baker's yeast).